We begin with the raw amino-acid sequence, 227 residues long: Uridylate kinase (227 aa).

Position 6-10 (6-10 (KVSGK)) interacts with ATP. G43 contributes to the UMP binding site. G44 and R48 together coordinate ATP. UMP-binding positions include D65 and 113–119 (FQPGQST). Residues T139, N140, Y145, and D148 each coordinate ATP.

The protein belongs to the UMP kinase family. In terms of assembly, homohexamer.

Its subcellular location is the cytoplasm. It carries out the reaction UMP + ATP = UDP + ADP. Its pathway is pyrimidine metabolism; CTP biosynthesis via de novo pathway; UDP from UMP (UMPK route): step 1/1. With respect to regulation, inhibited by UTP. In terms of biological role, catalyzes the reversible phosphorylation of UMP to UDP. This chain is Uridylate kinase, found in Sulfolobus acidocaldarius (strain ATCC 33909 / DSM 639 / JCM 8929 / NBRC 15157 / NCIMB 11770).